Consider the following 354-residue polypeptide: MGCTLSTDDKAAQERSKMIDRNLRDDGEKAAREVKLLLLGAGESGKSTIVKQMKIIHEAGYSEEECKQYKAVVYSNTIQSIIAIIRAMGRLKIDFADQARADDARQLFILAGSTEEGFMTGELAGVIQRLWKDGGVQACFSRSREYQLNDSAAYYLNDLDRISHASYVPTQQDVLRTRVKTTGIVETHFTFKDLHFKMFDVGGQRSERKKWIHCFEGVTAIIFCVALSDYDLVLAEDEEMNGMHESMKLFDSICNNKWFTDTSIILFLNKKDLFEEKIKKSLLTICFPEYAGSNTYEEAAAYVQCQFEDLNKRKDTKEIYTHFTCATDTKNVQFVFDAVTDVIIKNNLKDCGLF.

Gly2 carries N-myristoyl glycine lipidation. The S-palmitoyl cysteine moiety is linked to residue Cys3. A G-alpha domain is found at 32–354; sequence REVKLLLLGA…KNNLKDCGLF (323 aa). The tract at residues 35–48 is G1 motif; sequence KLLLLGAGESGKST. GTP is bound by residues 43–48, 150–151, and 175–178; these read ESGKST, DS, and LRTR. Ser47 is a Mg(2+) binding site. Residues 173–181 form a G2 motif region; sequence DVLRTRVKT. Thr181 is a binding site for Mg(2+). Residues 196–205 are G3 motif; that stretch reads FKMFDVGGQR. GTP-binding positions include 200-204, 269-272, and Ala326; these read DVGGQ and NKKD. The segment at 265–272 is G4 motif; the sequence is ILFLNKKD. The G5 motif stretch occupies residues 324-329; that stretch reads TCATDT.

This sequence belongs to the G-alpha family. G(i/o/t/z) subfamily. As to quaternary structure, heterotrimeric G proteins are composed of 3 units; alpha, beta and gamma. The alpha chain contains the guanine nucleotide binding site. Part of a spindle orientation complex. Identified in complex with the beta subunit GNB1 and the gamma subunit GNG1. Identified in complex with the beta subunit GNB1 and the gamma subunit GNG2. GTP binding causes dissociation of the heterotrimer, liberating the individual subunits so that they can interact with downstream effector proteins. Post-translationally, myristoylation at Gly-2 is required for membrane anchoring before palmitoylation. Palmitoylation at Cys-3 varies with membrane lipid composition.

The protein localises to the nucleus. It localises to the cytoplasm. The protein resides in the cell membrane. It is found in the cytoskeleton. Its subcellular location is the microtubule organizing center. The protein localises to the centrosome. It localises to the cell cortex. The protein resides in the membrane. The catalysed reaction is GTP + H2O = GDP + phosphate + H(+). Functionally, guanine nucleotide-binding proteins (G proteins) function as transducers downstream of G protein-coupled receptors (GPCRs) in numerous signaling cascades. The alpha chain contains the guanine nucleotide binding site and alternates between an active, GTP-bound state and an inactive, GDP-bound state. Signaling by an activated GPCR promotes GDP release and GTP binding. The alpha subunit has a low GTPase activity that converts bound GTP to GDP, thereby terminating the signal. Both GDP release and GTP hydrolysis are modulated by numerous regulatory proteins. Signaling is mediated via effector proteins, such as adenylate cyclase. Inhibits adenylate cyclase activity, leading to decreased intracellular cAMP levels. Required for cortical dynein-dynactin complex recruitment during metaphase. In Oryzias latipes (Japanese rice fish), this protein is Guanine nucleotide-binding protein G(i) subunit alpha-1 (gnai1).